Reading from the N-terminus, the 214-residue chain is MSASETTPQSNHGIGILGGSFDPVHVGHLWMAESALEQLPIEHVRWIPAATSPLKPHGPVASNEHRLQMLRLALSGQSGLVIDDWELRQDSVSYTLLTLEYLQEQFPDRPLYLIIGADSLASFDRWREPEQILKRCHLAVIARGGDPPPDYSILDGMTDETQIQRIRESQIQMPQIEISSSDLRNRIATGRSIRFRVPHPVATLIDNEKMYRVR.

It belongs to the NadD family.

The enzyme catalyses nicotinate beta-D-ribonucleotide + ATP + H(+) = deamido-NAD(+) + diphosphate. Its pathway is cofactor biosynthesis; NAD(+) biosynthesis; deamido-NAD(+) from nicotinate D-ribonucleotide: step 1/1. Catalyzes the reversible adenylation of nicotinate mononucleotide (NaMN) to nicotinic acid adenine dinucleotide (NaAD). This is Probable nicotinate-nucleotide adenylyltransferase from Rhodopirellula baltica (strain DSM 10527 / NCIMB 13988 / SH1).